The following is a 238-amino-acid chain: Small ribosomal subunit protein uS3 (238 aa).

A KH type-2 domain is found at 39–109 (IRTFINQQLA…TIKVNVVEVN (71 aa)). The disordered stretch occupies residues 215 to 238 (EAVPREATRRSPQRRLPQFENRSN).

It belongs to the universal ribosomal protein uS3 family. As to quaternary structure, part of the 30S ribosomal subunit. Forms a tight complex with proteins S10 and S14.

Binds the lower part of the 30S subunit head. Binds mRNA in the 70S ribosome, positioning it for translation. The polypeptide is Small ribosomal subunit protein uS3 (Thermosynechococcus vestitus (strain NIES-2133 / IAM M-273 / BP-1)).